The sequence spans 350 residues: N-acetyl-gamma-glutamyl-phosphate reductase (350 aa).

C153 is an active-site residue.

The protein belongs to the NAGSA dehydrogenase family. Type 1 subfamily.

The protein resides in the cytoplasm. It catalyses the reaction N-acetyl-L-glutamate 5-semialdehyde + phosphate + NADP(+) = N-acetyl-L-glutamyl 5-phosphate + NADPH + H(+). It participates in amino-acid biosynthesis; L-arginine biosynthesis; N(2)-acetyl-L-ornithine from L-glutamate: step 3/4. In terms of biological role, catalyzes the NADPH-dependent reduction of N-acetyl-5-glutamyl phosphate to yield N-acetyl-L-glutamate 5-semialdehyde. The sequence is that of N-acetyl-gamma-glutamyl-phosphate reductase from Thermosynechococcus vestitus (strain NIES-2133 / IAM M-273 / BP-1).